A 209-amino-acid polypeptide reads, in one-letter code: Small ribosomal subunit protein uS4 (209 aa).

The S4 RNA-binding domain occupies 98 to 158 (SRVDNIVYRL…EKSRSLAAIK (61 aa)).

Belongs to the universal ribosomal protein uS4 family. In terms of assembly, part of the 30S ribosomal subunit. Contacts protein S5. The interaction surface between S4 and S5 is involved in control of translational fidelity.

In terms of biological role, one of the primary rRNA binding proteins, it binds directly to 16S rRNA where it nucleates assembly of the body of the 30S subunit. With S5 and S12 plays an important role in translational accuracy. In Pseudothermotoga lettingae (strain ATCC BAA-301 / DSM 14385 / NBRC 107922 / TMO) (Thermotoga lettingae), this protein is Small ribosomal subunit protein uS4.